A 64-amino-acid polypeptide reads, in one-letter code: Large ribosomal subunit protein bL35 (64 aa).

Positions 19–44 (TGKLKASRPGRRHKLTGKTPKRKRQL) are disordered. Over residues 23 to 44 (KASRPGRRHKLTGKTPKRKRQL) the composition is skewed to basic residues.

This sequence belongs to the bacterial ribosomal protein bL35 family.

The protein is Large ribosomal subunit protein bL35 of Protochlamydia amoebophila (strain UWE25).